Here is a 192-residue protein sequence, read N- to C-terminus: Pyridoxal 5'-phosphate synthase subunit PdxT (192 aa).

53–55 (GES) serves as a coordination point for L-glutamine. Cys-82 serves as the catalytic Nucleophile. L-glutamine contacts are provided by residues Arg-108 and 134 to 135 (IR). Catalysis depends on charge relay system residues His-170 and Glu-172.

Belongs to the glutaminase PdxT/SNO family. As to quaternary structure, in the presence of PdxS, forms a dodecamer of heterodimers. Only shows activity in the heterodimer.

It carries out the reaction aldehydo-D-ribose 5-phosphate + D-glyceraldehyde 3-phosphate + L-glutamine = pyridoxal 5'-phosphate + L-glutamate + phosphate + 3 H2O + H(+). The catalysed reaction is L-glutamine + H2O = L-glutamate + NH4(+). Its pathway is cofactor biosynthesis; pyridoxal 5'-phosphate biosynthesis. Functionally, catalyzes the hydrolysis of glutamine to glutamate and ammonia as part of the biosynthesis of pyridoxal 5'-phosphate. The resulting ammonia molecule is channeled to the active site of PdxS. In Methanothermobacter thermautotrophicus (strain ATCC 29096 / DSM 1053 / JCM 10044 / NBRC 100330 / Delta H) (Methanobacterium thermoautotrophicum), this protein is Pyridoxal 5'-phosphate synthase subunit PdxT.